A 373-amino-acid chain; its full sequence is P2Y purinoceptor 1 (373 aa).

Topologically, residues 1–51 are extracellular; sequence MTEVPWSAVPNGTDAAFLAGLGSLWGNSTIASTAAVSSSFRCALIKTGFQF. 2 N-linked (GlcNAc...) asparagine glycosylation sites follow: asparagine 11 and asparagine 27. Intrachain disulfides connect cysteine 42-cysteine 296 and cysteine 124-cysteine 202. Lysine 46 is a binding site for ADP. A helical membrane pass occupies residues 52 to 74; that stretch reads YYLPAVYILVFIIGFLGNSVAIW. The Cytoplasmic segment spans residues 75–87; it reads MFVFHMKPWSGIS. A helical transmembrane segment spans residues 88-109; the sequence is VYMFNLALADFLYVLTLPALIF. Topologically, residues 110 to 125 are extracellular; the sequence is YYFNKTDWIFGDVMCK. A glycan (N-linked (GlcNAc...) asparagine) is linked at asparagine 113. Residues 126–147 traverse the membrane as a helical segment; the sequence is LQRFIFHVNLYGSILFLTCISA. The Cytoplasmic segment spans residues 148–166; sequence HRYSGVVYPLKSLGRLKKK. The chain crosses the membrane as a helical span at residues 167–188; that stretch reads NAIYVSVLVWLIVVVAISPILF. Over 189-214 the chain is Extracellular; that stretch reads YSGTGIRKNKTVTCYDSTSDEYLRSY. N-linked (GlcNAc...) asparagine glycosylation is present at asparagine 197. Position 203–205 (203–205) interacts with ADP; it reads YDS. The helical transmembrane segment at 215-237 threads the bilayer; it reads FIYSMCTTVAMFCIPLVLILGCY. At 238 to 260 the chain is on the cytoplasmic side; it reads GLIVRALIYKDLDNSPLRRKSIY. Residues 261–284 traverse the membrane as a helical segment; the sequence is LVIIVLTVFAVSYIPFHVMKTMNL. ADP-binding positions include 283-287, 303-306, and arginine 310; these read NLRAR and YATY. Residues 285–303 lie on the Extracellular side of the membrane; the sequence is RARLDFQTPEMCDFNDRVY. A helical membrane pass occupies residues 304–325; the sequence is ATYQVTRGLASLNSCVDPILYF. Residues 326 to 373 lie on the Cytoplasmic side of the membrane; sequence LAGDTFRRRLSRATRKASRRSEANLQSKSEEMTLNILSEFKQNGDTSL.

It belongs to the G-protein coupled receptor 1 family. Expressed in muscle, heart, liver, kidney, lung, brain, spleen, but not in testis.

Its subcellular location is the cell membrane. In terms of biological role, receptor for extracellular adenine nucleotides such as ADP. In platelets, binding to ADP leads to mobilization of intracellular calcium ions via activation of phospholipase C, a change in platelet shape, and ultimately platelet aggregation. The polypeptide is P2Y purinoceptor 1 (P2ry1) (Rattus norvegicus (Rat)).